The primary structure comprises 265 residues: Hydroxyethylthiazole kinase (265 aa).

Methionine 43 contacts substrate. The ATP site is built by arginine 119 and serine 165. Alanine 192 lines the substrate pocket.

It belongs to the Thz kinase family. It depends on Mg(2+) as a cofactor.

The enzyme catalyses 5-(2-hydroxyethyl)-4-methylthiazole + ATP = 4-methyl-5-(2-phosphooxyethyl)-thiazole + ADP + H(+). It participates in cofactor biosynthesis; thiamine diphosphate biosynthesis; 4-methyl-5-(2-phosphoethyl)-thiazole from 5-(2-hydroxyethyl)-4-methylthiazole: step 1/1. Functionally, catalyzes the phosphorylation of the hydroxyl group of 4-methyl-5-beta-hydroxyethylthiazole (THZ). The sequence is that of Hydroxyethylthiazole kinase from Haemophilus influenzae (strain 86-028NP).